Consider the following 367-residue polypeptide: MSSTAPLLTPYKMGRFDLSHRVVLAPLTRQRSYGNVPQPHAILYYQQRTTKGGLLIAEATGISDTAQGYKDTPGIWTKEQVEAWKPIVDGVHAKGGIFFCQIWHVGRVSNNTFQPNGQAPISSTNKSLKPAVRANGIDVATFSTPRRLETDEIPFVVNDYRVAARNAIEAGFDGVEIHGAHGYLIDQFLKDQVNDRSDKYGGSLENRCRFALEVVQAVTDEIGADKVGIRLSPFASYSEAADSNPEALGLYMANALNKFGILYCHMVEPRMVKLGEKFETPHSLRPIRDAFKGTFIAAGGYNKEDGNKAVSTGYTDLVAYGRLFLSNPDLPERFEIDAPLNKYNRETFYISDPVIGYTDYPFLPSDV.

Residues 26 to 28 (PLT), A59, and Q101 contribute to the FMN site. 178–181 (HGAH) contacts substrate. Catalysis depends on Y183, which acts as the Proton donor. FMN is bound at residue R230. R270 is a substrate binding site. Residues G300 and 321–322 (GR) each bind FMN.

This sequence belongs to the NADH:flavin oxidoreductase/NADH oxidase family. The cofactor is FMN.

Putative oxophytodienoate reductase that may be involved in the biosynthesis or metabolism of oxylipin signaling molecules. The protein is Putative 12-oxophytodienoate reductase 11 (OPR11) of Oryza sativa subsp. japonica (Rice).